Reading from the N-terminus, the 122-residue chain is Large ribosomal subunit protein uL14 (122 aa).

It belongs to the universal ribosomal protein uL14 family. As to quaternary structure, part of the 50S ribosomal subunit. Forms a cluster with proteins L3 and L19. In the 70S ribosome, L14 and L19 interact and together make contacts with the 16S rRNA in bridges B5 and B8.

In terms of biological role, binds to 23S rRNA. Forms part of two intersubunit bridges in the 70S ribosome. The protein is Large ribosomal subunit protein uL14 of Neisseria meningitidis serogroup C (strain 053442).